The chain runs to 305 residues: UDP-3-O-acyl-N-acetylglucosamine deacetylase (305 aa).

Positions 79, 238, and 242 each coordinate Zn(2+). Residue histidine 265 is the Proton donor of the active site.

It belongs to the LpxC family. The cofactor is Zn(2+).

The enzyme catalyses a UDP-3-O-[(3R)-3-hydroxyacyl]-N-acetyl-alpha-D-glucosamine + H2O = a UDP-3-O-[(3R)-3-hydroxyacyl]-alpha-D-glucosamine + acetate. It functions in the pathway glycolipid biosynthesis; lipid IV(A) biosynthesis; lipid IV(A) from (3R)-3-hydroxytetradecanoyl-[acyl-carrier-protein] and UDP-N-acetyl-alpha-D-glucosamine: step 2/6. In terms of biological role, catalyzes the hydrolysis of UDP-3-O-myristoyl-N-acetylglucosamine to form UDP-3-O-myristoylglucosamine and acetate, the committed step in lipid A biosynthesis. This Shigella boydii serotype 18 (strain CDC 3083-94 / BS512) protein is UDP-3-O-acyl-N-acetylglucosamine deacetylase.